The following is a 277-amino-acid chain: Bifunctional protein FolD (277 aa).

NADP(+) contacts are provided by residues 164-166 (GRS), Ser189, and Thr230.

Belongs to the tetrahydrofolate dehydrogenase/cyclohydrolase family. In terms of assembly, homodimer.

The catalysed reaction is (6R)-5,10-methylene-5,6,7,8-tetrahydrofolate + NADP(+) = (6R)-5,10-methenyltetrahydrofolate + NADPH. It carries out the reaction (6R)-5,10-methenyltetrahydrofolate + H2O = (6R)-10-formyltetrahydrofolate + H(+). The protein operates within one-carbon metabolism; tetrahydrofolate interconversion. Its function is as follows. Catalyzes the oxidation of 5,10-methylenetetrahydrofolate to 5,10-methenyltetrahydrofolate and then the hydrolysis of 5,10-methenyltetrahydrofolate to 10-formyltetrahydrofolate. This Clostridium perfringens (strain 13 / Type A) protein is Bifunctional protein FolD.